Consider the following 618-residue polypeptide: DNA mismatch repair protein MutL (618 aa).

The interval 371–401 (AREPATPRYSGGASGGSGGRQSVGGWSHAQP) is disordered. A compositionally biased stretch (gly residues) spans 382-392 (GASGGSGGRQS).

Belongs to the DNA mismatch repair MutL/HexB family.

This protein is involved in the repair of mismatches in DNA. It is required for dam-dependent methyl-directed DNA mismatch repair. May act as a 'molecular matchmaker', a protein that promotes the formation of a stable complex between two or more DNA-binding proteins in an ATP-dependent manner without itself being part of a final effector complex. The chain is DNA mismatch repair protein MutL from Salmonella arizonae (strain ATCC BAA-731 / CDC346-86 / RSK2980).